The chain runs to 244 residues: Claudin-12 (244 aa).

Residues 1–10 (MGCRDVHAAT) are Cytoplasmic-facing. The chain crosses the membrane as a helical span at residues 11 to 31 (VLSFLCGIASVAGLFAGTLLP). Over 32 to 87 (NWRKLRLITFNRNEKNLTVYTGLWVKCARYDGGNDCLMYDAAWYSSVDQLDLRVLQ) the chain is Extracellular. A helical membrane pass occupies residues 88–108 (FALPLSILIAMGALLLCLIGM). Residues 109-135 (CNTAFRSSVPNIKLAKCLVNSAGCHLV) are Cytoplasmic-facing. Residues 136–156 (AGLLFFLAGTVSLSPSIWVIF) form a helical membrane-spanning segment. Topologically, residues 157–174 (YNIHLNRKFEPVFAFDYA) are extracellular. Residues 175 to 195 (VYVTVASAGGLFMTALLLFIW) traverse the membrane as a helical segment. At 196–244 (YCACKSLPSPFWQPLYSHPPGMHTYSQPYSARSRLSAIEIDIPVVSHTT) the chain is on the cytoplasmic side. 2 positions are modified to phosphoserine: Ser228 and Ser231.

It belongs to the claudin family. In terms of assembly, interacts with OCLN.

The protein localises to the cell junction. The protein resides in the tight junction. It localises to the cell membrane. Plays a major role in tight junction-specific obliteration of the intercellular space, through calcium-independent cell-adhesion activity. The sequence is that of Claudin-12 (CLDN12) from Bos taurus (Bovine).